The sequence spans 403 residues: Phosphopentomutase (403 aa).

Mn(2+) contacts are provided by D13, D298, H303, D339, H340, and H351.

It belongs to the phosphopentomutase family. It depends on Mn(2+) as a cofactor.

It is found in the cytoplasm. The catalysed reaction is 2-deoxy-alpha-D-ribose 1-phosphate = 2-deoxy-D-ribose 5-phosphate. The enzyme catalyses alpha-D-ribose 1-phosphate = D-ribose 5-phosphate. The protein operates within carbohydrate degradation; 2-deoxy-D-ribose 1-phosphate degradation; D-glyceraldehyde 3-phosphate and acetaldehyde from 2-deoxy-alpha-D-ribose 1-phosphate: step 1/2. In terms of biological role, isomerase that catalyzes the conversion of deoxy-ribose 1-phosphate (dRib-1-P) and ribose 1-phosphate (Rib-1-P) to deoxy-ribose 5-phosphate (dRib-5-P) and ribose 5-phosphate (Rib-5-P), respectively. This is Phosphopentomutase from Streptococcus pneumoniae serotype 19F (strain G54).